Here is a 245-residue protein sequence, read N- to C-terminus: Phycocyanobilin:ferredoxin oxidoreductase (245 aa).

The protein belongs to the HY2 family.

It catalyses the reaction (2R,3Z)-phycocyanobilin + 4 oxidized [2Fe-2S]-[ferredoxin] = biliverdin IXalpha + 4 reduced [2Fe-2S]-[ferredoxin] + 4 H(+). Catalyzes the four-electron reduction of biliverdin IX-alpha (2-electron reduction at both the A and D rings); the reaction proceeds via an isolatable 2-electron intermediate, 181,182-dihydrobiliverdin. In Rippkaea orientalis (strain PCC 8801 / RF-1) (Cyanothece sp. (strain PCC 8801)), this protein is Phycocyanobilin:ferredoxin oxidoreductase.